We begin with the raw amino-acid sequence, 517 residues long: Arp2/3 complex-activating protein rickA (517 aa).

2 disordered regions span residues 313 to 441 (LENN…SKPA) and 461 to 517 (KVSD…SFVR). Composition is skewed to pro residues over residues 319-340 (PPSP…PSPL) and 347-378 (SSPP…PPMA). A WH2 domain is found at 406–423 (DTSDLMREIAGPKKLKKV). The tract at residues 444 to 477 (VNALSGLESIFARRAVIKVSDSSSSESDSGNWSD) is central and acidic domains. Positions 463–479 (SDSSSSESDSGNWSDVS) are enriched in low complexity. The span at 500–517 (THAQKINNRNSQNPSFVR) shows a compositional bias: polar residues.

As to quaternary structure, homodimer.

It is found in the cell surface. Recruits and activates the Arp2/3 complex, which in turn leads to actin polymerization, promoting Rickettsia motility during infection. The protein is Arp2/3 complex-activating protein rickA (rickA) of Rickettsia conorii (strain ATCC VR-613 / Malish 7).